Here is a 147-residue protein sequence, read N- to C-terminus: Hordoindoline-B1 (147 aa).

Positions 1–19 (MKTLFLLAILALVASTTFA) are cleaved as a signal peptide. A propeptide spanning residues 20–28 (QYSVGGGYN) is cleaved from the precursor.

Five disulfide bonds are present. Found in endosperm and aleurone layer of developing kernels, but not in the embryo.

It is found in the membrane. The protein localises to the secreted. The protein resides in the extracellular space. Acts as a membranotoxin, probably through its antibacterial and antifungal activities, contributing to the defense mechanism of the plant against predators. Forms monovalent cation-selective ion channels in membranes. Contributes to grain texture and hardness. The protein is Hordoindoline-B1 (HINB-1) of Hordeum vulgare (Barley).